The sequence spans 158 residues: Low molecular weight phosphotyrosine protein phosphatase (158 aa).

Residue A2 is modified to N-acetylalanine. C13 functions as the Nucleophile in the catalytic mechanism. R19 is an active-site residue. The active-site Proton donor is D130. Residues Y132 and Y133 each carry the phosphotyrosine modification.

It belongs to the low molecular weight phosphotyrosine protein phosphatase family. In terms of assembly, interacts with EPHA2; dephosphorylates EPHA2. Interacts with EPHB1. Interacts with the SH3 domain of SPTAN1. There is no interaction observed for isoform 2. Post-translationally, phosphorylated by LCK. Phosphorylation at Tyr-132 increases its phosphatase activity. Widely expressed with highest levels in brain and liver and lowest levels in muscle.

It is found in the cytoplasm. The enzyme catalyses O-phospho-L-tyrosyl-[protein] + H2O = L-tyrosyl-[protein] + phosphate. It catalyses the reaction a phosphate monoester + H2O = an alcohol + phosphate. With respect to regulation, inhibited by sulfhydryl reagents. Acts on tyrosine phosphorylated proteins, low-MW aryl phosphates and natural and synthetic acyl phosphates with differences in substrate specificity between isoform 1 and isoform 2. The protein is Low molecular weight phosphotyrosine protein phosphatase of Mus musculus (Mouse).